Reading from the N-terminus, the 556-residue chain is MSVSAFNRRWAAVILEALTRHGVRHICIAPGSRSTPLTLAAAENSAFIHHTHFDERGLGHLALGLAKVSKQPVAVIVTSGTAVANLYPALIEAGLTGEKLILLTADRPPELIDCGANQAIRQPGMFASHPTHSISLPRPTQDIPARWLVSTIDHALGTLHAGGVHINCPFAEPLYGEMDDTGLSWQQRLGDWWQDDKPWLREAPRLESEKQRDWFFWRQKRGVVVAGRMSAEEGKKVALWAQTLGWPLIGDVLSQTGQPLPCADLWLGNAKATSELQQAQIVVQLGSSLTGKRLLQWQASCEPEEYWIVDDIEGRLDPAHHRGRRLIANIADWLELHPAEKRQPWCVEIPRLAEQAMQAVIACRDAFGEAQLAHRISDYLPEQGQLFVGNSLVVRLIDALSQLPAGYPVYSNRGASGIDGLLSTAAGVQRASGKPTLAIVGDLSALYDLNALALLRQVSAPLVLIVVNNNGGQIFSLLPTPKSERERFYLMPQNVHFEHAAAMFELKYHRPQNWQELETVLADAWRTPTTTVIEMVVNDTDGAQTLQQLLAQVSHL.

The protein belongs to the TPP enzyme family. MenD subfamily. As to quaternary structure, homodimer. The cofactor is Mg(2+). Mn(2+) is required as a cofactor. Requires thiamine diphosphate as cofactor.

It carries out the reaction isochorismate + 2-oxoglutarate + H(+) = 5-enolpyruvoyl-6-hydroxy-2-succinyl-cyclohex-3-ene-1-carboxylate + CO2. The protein operates within quinol/quinone metabolism; 1,4-dihydroxy-2-naphthoate biosynthesis; 1,4-dihydroxy-2-naphthoate from chorismate: step 2/7. It functions in the pathway quinol/quinone metabolism; menaquinone biosynthesis. Catalyzes the thiamine diphosphate-dependent decarboxylation of 2-oxoglutarate and the subsequent addition of the resulting succinic semialdehyde-thiamine pyrophosphate anion to isochorismate to yield 2-succinyl-5-enolpyruvyl-6-hydroxy-3-cyclohexene-1-carboxylate (SEPHCHC). The chain is 2-succinyl-5-enolpyruvyl-6-hydroxy-3-cyclohexene-1-carboxylate synthase from Escherichia coli O157:H7.